The chain runs to 116 residues: Sperm mitochondrial-associated cysteine-rich protein (116 aa).

Tandem repeats lie at residues 6-13 (KHSKCCPA), 14-21 (KGNQCCPP), 30-37 (KGNQCCPP), 38-45 (KQNQCCQP), 46-53 (KGSQCCPP), 54-61 (KHNHCCQP), and 62-68 (KPPCCIQ). The 7 X 7 (OR 8) AA approximate repeats stretch occupies residues 6–68 (KHSKCCPAKG…CQPKPPCCIQ (63 aa)). Residues 80 to 116 (VSPLNMESEPNSPQTQDKGCQTQQQPHSPQNESRPSK) form a disordered region. The span at 93–104 (QTQDKGCQTQQQ) shows a compositional bias: low complexity. Residues 105 to 116 (PHSPQNESRPSK) show a composition bias toward polar residues.

Testis. Is selectively expressed in the spermatids of seminiferous tubules.

The protein localises to the cytoplasm. It is found in the mitochondrion membrane. Involved in sperm motility. Its absence is associated with genetic background dependent male infertility. Infertility may be due to reduced sperm motility in the female reproductive tract and inability to penetrate the oocyte zona pellucida. The polypeptide is Sperm mitochondrial-associated cysteine-rich protein (SMCP) (Homo sapiens (Human)).